A 329-amino-acid chain; its full sequence is Eukaryotic translation initiation factor 3 subunit I (329 aa).

WD repeat units follow at residues 8–47 (GHQR…RLGT), 50–89 (GHGG…NIAT), 145–184 (ITDS…KIHS), 187–226 (EHTH…LLKE), and 284–323 (GHFG…FDYT).

Belongs to the eIF-3 subunit I family. In terms of assembly, component of the eukaryotic translation initiation factor 3 (eIF-3) complex.

It localises to the cytoplasm. In terms of biological role, component of the eukaryotic translation initiation factor 3 (eIF-3) complex, which is involved in protein synthesis of a specialized repertoire of mRNAs and, together with other initiation factors, stimulates binding of mRNA and methionyl-tRNAi to the 40S ribosome. The eIF-3 complex specifically targets and initiates translation of a subset of mRNAs involved in cell proliferation. This chain is Eukaryotic translation initiation factor 3 subunit I, found in Bombyx mori (Silk moth).